A 180-amino-acid chain; its full sequence is MAVIKVKKTGQVIEGEDNVRAFLNSQGVLYEHWDITKLPEHLRDKYVLTDEEKEEILATFKDEIEDLAARRGYKTWDIVALSDATPNLEELLKKFEQVHIHTEDEVRAITAGHGIFIIKGDKETGYFDVELEAGDVISVPEGNPHYFTLMDDRQVVAVRLFIDPSGWVAHPYEEKEEVNS.

Residues H99, H101, E105, and H145 each coordinate Fe(2+). Ni(2+) is bound by residues H99, H101, E105, and H145.

It belongs to the acireductone dioxygenase (ARD) family. Monomer. Requires Fe(2+) as cofactor. Ni(2+) is required as a cofactor.

It catalyses the reaction 1,2-dihydroxy-5-(methylsulfanyl)pent-1-en-3-one + O2 = 3-(methylsulfanyl)propanoate + CO + formate + 2 H(+). It carries out the reaction 1,2-dihydroxy-5-(methylsulfanyl)pent-1-en-3-one + O2 = 4-methylsulfanyl-2-oxobutanoate + formate + 2 H(+). It participates in amino-acid biosynthesis; L-methionine biosynthesis via salvage pathway; L-methionine from S-methyl-5-thio-alpha-D-ribose 1-phosphate: step 5/6. Its function is as follows. Catalyzes 2 different reactions between oxygen and the acireductone 1,2-dihydroxy-3-keto-5-methylthiopentene (DHK-MTPene) depending upon the metal bound in the active site. Fe-containing acireductone dioxygenase (Fe-ARD) produces formate and 2-keto-4-methylthiobutyrate (KMTB), the alpha-ketoacid precursor of methionine in the methionine recycle pathway. Ni-containing acireductone dioxygenase (Ni-ARD) produces methylthiopropionate, carbon monoxide and formate, and does not lie on the methionine recycle pathway. The chain is Acireductone dioxygenase from Geobacillus thermodenitrificans (strain NG80-2).